A 148-amino-acid polypeptide reads, in one-letter code: uncharacterized protein (148 aa).

The region spanning 2 to 63 (LDELDKRILY…LINPFKAGYE (62 aa)) is the HTH asnC-type domain. Residues 21 to 40 (YSEIARILGVPESTVRVRVK) constitute a DNA-binding region (H-T-H motif).

This is an uncharacterized protein from Pyrococcus furiosus (strain ATCC 43587 / DSM 3638 / JCM 8422 / Vc1).